Consider the following 101-residue polypeptide: NADH-quinone oxidoreductase subunit K (101 aa).

Helical transmembrane passes span 4 to 24, 29 to 49, and 61 to 81; these read LSDY…GIFV, IITL…NFVA, and IFVF…LAIL.

The protein belongs to the complex I subunit 4L family. NDH-1 is composed of 14 different subunits. Subunits NuoA, H, J, K, L, M, N constitute the membrane sector of the complex.

The protein localises to the cell inner membrane. The enzyme catalyses a quinone + NADH + 5 H(+)(in) = a quinol + NAD(+) + 4 H(+)(out). In terms of biological role, NDH-1 shuttles electrons from NADH, via FMN and iron-sulfur (Fe-S) centers, to quinones in the respiratory chain. The immediate electron acceptor for the enzyme in this species is believed to be ubiquinone. Couples the redox reaction to proton translocation (for every two electrons transferred, four hydrogen ions are translocated across the cytoplasmic membrane), and thus conserves the redox energy in a proton gradient. This Ruthia magnifica subsp. Calyptogena magnifica protein is NADH-quinone oxidoreductase subunit K.